The chain runs to 468 residues: Cysteine--tRNA ligase (468 aa).

Cys27 serves as a coordination point for Zn(2+). Positions Pro29–Asn39 match the 'HIGH' region motif. Residues Cys207, His232, and Glu236 each coordinate Zn(2+). The short motif at Lys264 to Ser268 is the 'KMSKS' region element. Lys267 is a binding site for ATP.

It belongs to the class-I aminoacyl-tRNA synthetase family. Monomer. Zn(2+) serves as cofactor.

It is found in the cytoplasm. The catalysed reaction is tRNA(Cys) + L-cysteine + ATP = L-cysteinyl-tRNA(Cys) + AMP + diphosphate. This Acetivibrio thermocellus (strain ATCC 27405 / DSM 1237 / JCM 9322 / NBRC 103400 / NCIMB 10682 / NRRL B-4536 / VPI 7372) (Clostridium thermocellum) protein is Cysteine--tRNA ligase.